We begin with the raw amino-acid sequence, 551 residues long: MARGAEGGRGDAGWGLRGALAAVALLSALNAAGTVFALCQWRGLSSALRALEAQRGREQREDSALRSFLAELSRAPRGASAPPQDPASSARNKRSHSGEPAPHIRAESHDMLMMMTYSMVPIRVMVDLCNSTKGICLTGPSGPPGPPGAGGLPGHNGLDGQPGPQGPKGEKGANGKRGKMGIPGAAGNPGERGEKGDHGELGLQGNEGPPGQKGEKGDKGDVSNDVLLAGAKGDQGPPGPPGPPGPPGPPGPPGSRRAKGPRQPSMFNGQCPGETCAIPNDDTLVGKADEKASEHHSPQAESMITSIGNPVQVLKVTETFGTWIRESANKSDDRIWVTEHFSGIMVKEFKDQPSLLNGSYTFIHLPYYFHGCGHVVYNNSLYYHKGGSNTLVRFEFGQETSQTLKLENALYFDRKYLFANSKTYFNLAVDEKGLWIIYASSVDGSSILVAQLDERTFSVVQHVNTTYPKSKAGNAFIARGILYVTDTKDMRVTFAFDLLGGKQINANFDLRTSQSVLAMLAYNMRDQHLYSWEDGHLMLYPVQFLSTTLNQ.

The Cytoplasmic portion of the chain corresponds to M1–R17. The chain crosses the membrane as a helical; Signal-anchor for type II membrane protein span at residues G18–C39. At Q40 to Q551 the chain is on the extracellular side. The tract at residues L72 to E107 is disordered. Low complexity predominate over residues A79–A90. The N-linked (GlcNAc...) asparagine glycan is linked to N130. Collagen-like domains lie at L137 to K195 and G196 to V222. The tract at residues G139–D282 is disordered. Basic and acidic residues-rich tracts occupy residues E191–E200 and K213–V222. Residues P237 to P253 show a composition bias toward pro residues. The region spanning Q299–S546 is the Olfactomedin-like domain. N329, N357, N378, and N464 each carry an N-linked (GlcNAc...) asparagine glycan.

Homotrimer (via collagen-like domains). Interacts with NRCAM and NFASC/neurofascin. Interaction with glial NRCAM enhances interaction with axonal NFASC. Interacts with MYOC. In terms of processing, N-glycosylated. Proteolytic processing by a furin-like protease causes shedding of the ectodomain. Further cleavage by BMP1 releases the olfactomedin-like domain. As to expression, specifically expressed in spinal cord, brain, placenta and sciatic nerve. More abundant in peripheral than central nervous system.

The protein localises to the cell membrane. It localises to the cell projection. The protein resides in the axon. Its subcellular location is the secreted. It is found in the extracellular space. The protein localises to the extracellular matrix. Functionally, ligand for NRCAM and NFASC/neurofascin that plays a role in the formation and maintenance of the nodes of Ranvier on myelinated axons. Mediates interaction between Schwann cell microvilli and axons via its interactions with NRCAM and NFASC. Nodes of Ranvier contain clustered sodium channels that are crucial for the saltatory propagation of action potentials along myelinated axons. During development, nodes of Ranvier are formed by the fusion of two heminodes. Required for normal clustering of sodium channels at heminodes; not required for the formation of mature nodes with normal sodium channel clusters. Required, together with NRCAM, for maintaining NFASC and sodium channel clusters at mature nodes of Ranvier. The protein is Gliomedin (GLDN) of Homo sapiens (Human).